The following is a 151-amino-acid chain: Methylglyoxal synthase (151 aa).

Residues Arg6–Met151 enclose the MGS-like domain. Substrate contacts are provided by residues His19, Lys23, Thr45 to Thr48, and Ser65 to Gly66. Residue Asp71 is the Proton donor/acceptor of the active site. His98 lines the substrate pocket.

The protein belongs to the methylglyoxal synthase family.

It catalyses the reaction dihydroxyacetone phosphate = methylglyoxal + phosphate. In terms of biological role, catalyzes the formation of methylglyoxal from dihydroxyacetone phosphate. The polypeptide is Methylglyoxal synthase (Vibrio parahaemolyticus serotype O3:K6 (strain RIMD 2210633)).